The primary structure comprises 357 residues: DNA replication and repair protein RecF (357 aa).

30–37 (GPNGSGKT) is an ATP binding site.

Belongs to the RecF family.

Its subcellular location is the cytoplasm. Its function is as follows. The RecF protein is involved in DNA metabolism; it is required for DNA replication and normal SOS inducibility. RecF binds preferentially to single-stranded, linear DNA. It also seems to bind ATP. The chain is DNA replication and repair protein RecF from Vibrio campbellii (strain ATCC BAA-1116).